The sequence spans 113 residues: Transcriptional regulator RamA (113 aa).

Residues 9 to 107 (DTIVEWIDDN…NQPPGAYRKE (99 aa)) enclose the HTH araC/xylS-type domain. 2 consecutive DNA-binding regions (H-T-H motif) follow at residues 26–47 (DDIA…LQYK) and 74–97 (VYDI…TRTF).

As to quaternary structure, monomer. Interacts with the C-terminus of RNAP subunit RpoA when part of class I or class II promoter complexes. Also interacts with sigma-70/RpoD in class II promoter complexes.

Functionally, transcriptional regulator. Binds to regulatory regions of target genes, including its own gene, efflux pump operon acrAB, antisense RNA gene micF, and various genes involved in lipid A biosynthesis, including lpxO and lpxL-2. Regulates expression of many genes, perhaps including its own; activates various lipid A biosynthetic genes, and as a result of activating acrAB, confers multidrug resistance. Plays a role in virulence and survival in host cells. The polypeptide is Transcriptional regulator RamA (Klebsiella pneumoniae subsp. pneumoniae (strain HS11286)).